Here is a 283-residue protein sequence, read N- to C-terminus: Spore coat polysaccharide biosynthesis protein SpsK (283 aa).

It belongs to the dTDP-4-dehydrorhamnose reductase family.

The protein operates within spore coat biogenesis; spore coat polysaccharide biosynthesis. The protein is Spore coat polysaccharide biosynthesis protein SpsK (spsK) of Bacillus subtilis (strain 168).